Reading from the N-terminus, the 251-residue chain is Hydroxyacylglutathione hydrolase (251 aa).

Zn(2+)-binding residues include His-53, His-55, Asp-57, His-58, His-110, Asp-127, and His-165.

Belongs to the metallo-beta-lactamase superfamily. Glyoxalase II family. Monomer. The cofactor is Zn(2+).

The catalysed reaction is an S-(2-hydroxyacyl)glutathione + H2O = a 2-hydroxy carboxylate + glutathione + H(+). It functions in the pathway secondary metabolite metabolism; methylglyoxal degradation; (R)-lactate from methylglyoxal: step 2/2. Functionally, thiolesterase that catalyzes the hydrolysis of S-D-lactoyl-glutathione to form glutathione and D-lactic acid. The chain is Hydroxyacylglutathione hydrolase from Escherichia coli O81 (strain ED1a).